Consider the following 299-residue polypeptide: uncharacterized protein (299 aa).

The disordered stretch occupies residues 1–20 (MTTKHELVINTNEPSAPNAD). A helical membrane pass occupies residues 172 to 192 (SFFIPPMVVISTPICLGLTVF).

Belongs to the IIV-6 259R family.

Its subcellular location is the membrane. This is an uncharacterized protein from Acheta domesticus (House cricket).